The sequence spans 255 residues: Fumarate reductase cytochrome b subunit (255 aa).

The next 5 membrane-spanning stretches (helical) occupy residues 33–53, 78–98, 126–146, 168–188, and 208–228; these read TGLILALFMIAHMFLVSSILI, IVSVVAAGVILILVAHAFLAL, WFIQALTGFAMFFLASIHLFV, FWLLYIFLLFAVELHGSIGLY, and IKWAMSVFFIVLGLCTYGAYI. His-44, His-93, His-143, and His-182 together coordinate heme b.

It belongs to the diheme cytochrome b FrdC family. As to quaternary structure, part of an enzyme complex containing three subunits: a flavoprotein (frdA), an iron-sulfur protein (frdB), and diheme cytochrome b (frdC). It depends on heme b as a cofactor.

It is found in the cell inner membrane. The fumarate reductase enzyme complex is required for fumarate respiration. This subunit anchors the complex in the membrane and binds a diheme cytochrome b. The chain is Fumarate reductase cytochrome b subunit (frdC) from Helicobacter pylori (strain J99 / ATCC 700824) (Campylobacter pylori J99).